Consider the following 207-residue polypeptide: Large ribosomal subunit protein uL4 (207 aa).

The segment at 49-78 is disordered; sequence HAVKNRSAVSGGGRKPWRQKGTGRARQGSI.

The protein belongs to the universal ribosomal protein uL4 family. As to quaternary structure, part of the 50S ribosomal subunit.

One of the primary rRNA binding proteins, this protein initially binds near the 5'-end of the 23S rRNA. It is important during the early stages of 50S assembly. It makes multiple contacts with different domains of the 23S rRNA in the assembled 50S subunit and ribosome. Functionally, forms part of the polypeptide exit tunnel. The chain is Large ribosomal subunit protein uL4 from Streptococcus pyogenes serotype M49 (strain NZ131).